The sequence spans 65 residues: uncharacterized protein (65 aa).

The next 2 membrane-spanning stretches (helical) occupy residues 4–24 (AWLFWSVIVLYFFIKFFDKVL) and 39–59 (LPIPMKILLTIALVLFLFIVF).

The protein localises to the membrane. This is an uncharacterized protein from Streptococcus pneumoniae serotype 2 (strain D39 / NCTC 7466).